The sequence spans 172 residues: uncharacterized protein (172 aa).

Residues 1 to 101 (MEHVSKRSIG…RYDINTRPLV (101 aa)) are Lumenal-facing. A helical membrane pass occupies residues 102–122 (VVLAISIVFFGCLLVLKDIII). Residues 123–145 (QSSENILSVSKWKIIGASFMGTP) are Cytoplasmic-facing. A helical membrane pass occupies residues 146–164 (YTGLLTGLVGPLLSPFSAV). Topologically, residues 165–172 (SSWLSFIF) are lumenal.

Its subcellular location is the endoplasmic reticulum membrane. This is an uncharacterized protein from Saccharomyces cerevisiae (strain ATCC 204508 / S288c) (Baker's yeast).